A 224-amino-acid polypeptide reads, in one-letter code: GTP cyclohydrolase 1 (224 aa).

The tract at residues Met-1–Arg-20 is disordered. Positions 114, 117, and 185 each coordinate Zn(2+).

The protein belongs to the GTP cyclohydrolase I family. As to quaternary structure, toroid-shaped homodecamer, composed of two pentamers of five dimers.

It catalyses the reaction GTP + H2O = 7,8-dihydroneopterin 3'-triphosphate + formate + H(+). It functions in the pathway cofactor biosynthesis; 7,8-dihydroneopterin triphosphate biosynthesis; 7,8-dihydroneopterin triphosphate from GTP: step 1/1. This chain is GTP cyclohydrolase 1, found in Chlorobaculum tepidum (strain ATCC 49652 / DSM 12025 / NBRC 103806 / TLS) (Chlorobium tepidum).